The chain runs to 743 residues: Threonine synthase-like 1 (743 aa).

Lys281 bears the N6-acetyllysine mark. An N6-(pyridoxal phosphate)lysine modification is found at Lys351.

This sequence belongs to the threonine synthase family. Pyridoxal 5'-phosphate is required as a cofactor.

In Macaca fascicularis (Crab-eating macaque), this protein is Threonine synthase-like 1 (THNSL1).